The primary structure comprises 185 residues: NOP protein chaperone 1 (185 aa).

A disordered region spans residues Met-1 to Ile-40. Residues Ser-10–Ser-21 show a composition bias toward low complexity. Residues Ser-34 and Ser-66 each carry the phosphoserine modification. Positions Phe-118 to Lys-185 are disordered. The segment covering Ser-143–Ile-152 has biased composition (acidic residues). At Ser-178 the chain carries Phosphoserine.

As to quaternary structure, interacts with NOP58, RUVBL1 and RUVBL2; the interactions are direct and NOPCHAP1 bridges the association of NOP58 with RUVBL1:RUVBL2 even in absence of snoRNAs. The interactions with RUVBL1 and RUVBL2 are disrupted upon ATP binding.

The protein localises to the nucleus. Its function is as follows. Client-loading PAQosome/R2TP complex cofactor that selects NOP58 to promote box C/D small nucleolar ribonucleoprotein (snoRNP) assembly. Acts as a bridge between NOP58 and the R2TP complex via RUVBL1:RUVBL2. This Homo sapiens (Human) protein is NOP protein chaperone 1.